The chain runs to 459 residues: MKIGFWTWKSIKLSIAIPLMCSHVSSALRAELGLDEEAFGTAAAKKYETLLEKKWTSIVRLQKKIMDLESRNAALQTELANLTPTALSKRHQDPASWLPRSVRHSLESHRDTINSIAFHPIYSSLASCSDDCTIKIWDWELGELERTVKGHTRAVLDVDYGGPRSSILLASCSSDLSIKLWDPADEYKNIRTLLGHDHSVGAVRFIPSGASGTLSSGNLLVSASRDGTLRIWDVVTGYCVKTLRGHTAWVRDVCPSFDGRFLLSAGDDMTTRLWNISGSNSDHKLTMLGHEHVIECCALAPFASYQYLAALTGLKAPPASSAAEFMATGSRDKTIKLWDAHGRCLGTLIGHDNWVRALAFHPGGKYLLSVSDDKTLRCWDLSQGGKCVKTLKDAHERFITCLRWAPGIFKNVPGVSTRDANGESNGVLNTGLKGDTPDVQVRCVIATGGVDKKLQVFAD.

Residues 56 to 83 (TSIVRLQKKIMDLESRNAALQTELANLT) are a coiled coil. WD repeat units lie at residues 108-149 (SHRD…RTVK), 151-191 (HTRA…KNIR), 195-244 (GHDH…KTLR), 246-284 (HTAWVRDVCPSFDGRFLLSAGDDMTTRLWNISGSNSDHK), 306-348 (QYLA…LGTL), 350-389 (GHDNWVRALAFHPGGKYLLSVSDDKTLRCWDLSQGGKCVK), 394-438 (AHER…DTPD), and 440-459 (QVRCVIATGGVDKKLQVFAD).

It belongs to the WD repeat LIS1/nudF family. In terms of assembly, self-associates. Interacts with NDL1 and dynein.

Its subcellular location is the cytoplasm. The protein localises to the cytoskeleton. It localises to the spindle pole. Its function is as follows. Positively regulates the activity of the minus-end directed microtubule motor protein dynein. May enhance dynein-mediated microtubule sliding by targeting dynein to the microtubule plus end. Required for nuclear migration during vegetative growth as well as development. Required for retrograde early endosome (EE) transport from the hyphal tip. Required for localization of dynein to the mitotic spindle poles. Recruits additional proteins to the dynein complex at SPBs. This is Nuclear distribution protein PAC1-2 from Uncinocarpus reesii (strain UAMH 1704).